The following is a 48-amino-acid chain: ATP synthase protein 8 (48 aa).

Met1 is subject to N-formylmethionine. The Mitochondrial intermembrane segment spans residues 1 to 12; it reads MPQLVPFYFTNQ. The helical transmembrane segment at 13 to 32 threads the bilayer; that stretch reads IFYGFASLSVIVYLFSIYIL. Topologically, residues 33–48 are mitochondrial matrix; the sequence is PHYLEIYVTRIFITKT.

In terms of assembly, F-type ATP synthases have 2 components, the catalytic core F(1) and the membrane-embedded component F(0), linked together by a central stalk and a peripheral stalk. The central stalk, also called rotor shaft, is often seen as part of F(1). The peripheral stalk is seen as part of F(0). F(0) contains the membrane channel next to the rotor. F-type ATP synthases form dimers but each monomer functions independently in ATP generation. The dimer consists of 17 different polypeptides: ATP1 (subunit alpha, 3 molecules per monomer, part of F(1)), ATP2 (subunit beta, 3 copies per monomer, part of F(1)), ATP3 (subunit gamma, part of the central stalk), ATP4 (subunit b, part of the peripheral stalk), ATP5/OSCP (subunit 5/OSCP, part of the peripheral stalk), ATP6 (subunit a, part of the peripheral stalk), ATP7 (subunit d, part of the peripheral stalk), ATP8 (subunit 8, part of the peripheral stalk), OLI1 (subunit c, part of the rotor, 10 molecules per monomer), ATP14 (subunit h, part of the peripheral stalk), ATP15 (subunit epsilon, part of the central stalk), ATP16 (subunit delta, part of the central stalk), ATP17 (subunit f, part of the peripheral stalk), ATP18 (subunit i/j, part of the peripheral stalk), ATP19 (subunit k, dimer-specific, at interface between monomers), ATP20 (subunit g, at interface between monomers), TIM11 (subunit e, at interface between monomers).

The protein resides in the mitochondrion inner membrane. In terms of biological role, mitochondrial membrane ATP synthase (F(1)F(0) ATP synthase or Complex V) produces ATP from ADP in the presence of a proton gradient across the membrane which is generated by electron transport complexes of the respiratory chain. F-type ATP synthases consist of two structural domains, F(1) - containing the extramembraneous catalytic core, and F(0) - containing the membrane proton channel, linked together by a central stalk and a peripheral stalk. During catalysis, ATP synthesis in the catalytic domain of F(1) is coupled via a rotary mechanism of the central stalk subunits to proton translocation. Part of the complex F(0) domain. Minor subunit located with subunit a/ATP6 in the membrane. This Yarrowia lipolytica (strain CLIB 122 / E 150) (Yeast) protein is ATP synthase protein 8.